The primary structure comprises 333 residues: E3 ubiquitin-protein ligase MIR1 (333 aa).

Residues 1-60 form an RING-CH-type zinc finger; that stretch reads MEDEDVPVCWICNEELGNERFRACGCTGELENVHRSCLSTWLTISRNTACQICGVVYNTR. The Cytoplasmic segment spans residues 1 to 82; sequence MEDEDVPVCW…PRLTYQEGLE (82 aa). Cysteine 9, cysteine 12, cysteine 24, cysteine 26, histidine 34, cysteine 37, cysteine 50, and cysteine 53 together coordinate Zn(2+). A helical transmembrane segment spans residues 83–103; the sequence is LIVFIFIMTLGAAGLAAATWV. Topologically, residues 104 to 121 are extracellular; it reads WLYIVGGHDPEIDHVAAA. A helical membrane pass occupies residues 122–142; it reads AYYVFFVFYQLFVVFGLGAFF. Residues 143-333 are Cytoplasmic-facing; sequence HMMRHVGRAY…SAVSSALMFH (191 aa). Positions 187-257 are disordered; that stretch reads GDNQDEEGPA…GRDDNVEPTA (71 aa). Low complexity predominate over residues 195–221; sequence PAGAAPGDQNGPAGAAPGDQDGPADGA. A compositionally biased stretch (basic and acidic residues) spans 235–252; sequence AGYKEAGEPTHNDGRDDN.

In terms of assembly, binds human MHC-I and CD1D.

The protein localises to the host cell membrane. It localises to the host endoplasmic reticulum. The catalysed reaction is [E2 ubiquitin-conjugating enzyme]-S-ubiquitinyl-L-cysteine + [acceptor protein]-L-cysteine = [E2 ubiquitin-conjugating enzyme]-L-cysteine + [acceptor protein]-S-ubiquitinyl-L-cysteine.. Its pathway is protein modification; protein ubiquitination. In terms of biological role, membrane-bound E3 ubiquitin ligase expressed during late stages of lytic replication to mediate polyubiquitination of various host membrane proteins related to the immune response. Promotes ubiquitination and subsequent degradation of host MHC-I and CD1D molecules, DC-SIGN and DC-SIGNR, presumably to prevent lysis of infected cells by cytotoxic T-lymphocytes. Binds target molecules through transmembrane interaction. E3 ubiquitin-protein ligases accept ubiquitin from specific E2 ubiquitin-conjugating enzymes, and then transfer it to target protein. The result of this ubiquitination is the enhancement of the endocytosis of the target chain and the delivery to the lysosome, where it is proteolytically destroyed. Induces ubiquitination not only on lysines, but also on cysteine residues. In Human herpesvirus 8 type P (isolate GK18) (HHV-8), this protein is E3 ubiquitin-protein ligase MIR1 (K3).